The sequence spans 203 residues: EF-hand calcium-binding domain-containing protein 8 (203 aa).

The interval 61–107 (SSEKPGESPKPQKMAQPGGSQKKETSRSVPVTDPTSHNSEINQRDQQ) is disordered. Residues 87-107 (RSVPVTDPTSHNSEINQRDQQ) show a composition bias toward polar residues. EF-hand domains follow at residues 111–145 (MHLA…VLSS) and 146–181 (MSEE…EFQG).

The polypeptide is EF-hand calcium-binding domain-containing protein 8 (Efcab8) (Mus musculus (Mouse)).